Reading from the N-terminus, the 399-residue chain is Nicotinate phosphoribosyltransferase (399 aa).

The residue at position 217 (His217) is a Phosphohistidine; by autocatalysis.

Belongs to the NAPRTase family. In terms of processing, transiently phosphorylated on a His residue during the reaction cycle. Phosphorylation strongly increases the affinity for substrates and increases the rate of nicotinate D-ribonucleotide production. Dephosphorylation regenerates the low-affinity form of the enzyme, leading to product release.

It catalyses the reaction nicotinate + 5-phospho-alpha-D-ribose 1-diphosphate + ATP + H2O = nicotinate beta-D-ribonucleotide + ADP + phosphate + diphosphate. The protein operates within cofactor biosynthesis; NAD(+) biosynthesis; nicotinate D-ribonucleotide from nicotinate: step 1/1. Functionally, catalyzes the synthesis of beta-nicotinate D-ribonucleotide from nicotinate and 5-phospho-D-ribose 1-phosphate at the expense of ATP. This Burkholderia ambifaria (strain MC40-6) protein is Nicotinate phosphoribosyltransferase.